Here is a 1693-residue protein sequence, read N- to C-terminus: MEAHQFLKAPGITTAVEQAALATANSALANAVVVRPFLSHQQIEILINLMQPRQLVFRPEVFWNQPIQRVIHNELELYCRARSGRCLEIGAHPRSINDNPNVVHRCFLRPVGRDVQRWYTAPTRGPAANCRRSALRGLPAADRTYCFDGFSGCSCPAETGIALYSLHDMSPSDVAEAMFRHGMTRLYAALHLPPEVLLPPGTYRTASYLLIHDGRRVVVTYEGDTSAGYNHDVSNLRSWIRTTKVTGDHPLVIERVRAIGCHFVLLLTAAPEPSPMPYVPYPRSTEVYVRSIFGPGGTPSLFPTSCSTKSTFHAVPAHIWDRLMLFGATLDDQAFCCSRLMTYLRGISYKVTVGTLVANEGRNASEDALTAVITAAYLTICHQRYLRTQAISKGIRRLEREHDQKFITRLYSWLFEKSGRDYIPGRQLEFYAQCRRWLSAGFHLDPRVLVFDESAPCHCRTVIRKALSKFCCFMKWLGQECTCFLQPAEGVVGDQGHDNESYEGSDVDPAESAISDISGSYVVPGTALQPLYQALDLPDEIVARACRLTATVKVSQVDGRIDCETLLGNKTFRTSFVDGAVLETNGPERHNLSFDASQSTMAAGPFSLTYAASAAGLEVRYVGAGLDHRAIFAPGVSPRSNPGEVTAFCSALYRFNREAQRHSLTGNLWFHPEGLIGLFAPFSPGHVWESAKPFCGESTLYTRTWSEVDAVSSPTRPDLGFMSEPPIPSRAATPTLAAPLPPLAPDPSPPSSAPALDEPASAATSGVPAITHQTARHRRLLFTYPDGSKVFAGSLFESTCTWLVNASNVDHCPGGGLCHAFYQRYPASFDAACFVMRDGAAAYTLTPRPIIHRVAPDYRLEHNPKRLEAAYRETCSRLGTAAYPLLGTGIYQVPIGPSFDAWERNHRPGDELYLPELAARWFEANRPTRPTLTITEDAARTANLAIELDSATDVGRACAGCRVTPGVVQYQFTAGVPGSGKSRSITRADVDVVVVPTRELRNAWRRRGFAAFTPHTAARVTDGRRVVIDEAPSLPPHLLLLHMQRAATVHLLGDPNQIPAIDFEHPGLVPAIRPDLAPTSWWHVTHRCPADVCELIRGAYPMIQTTSRVLRSLFWGEPAVGQKLVFTQAAKPANPGSVTVHDSQGATYTYTTIIATADARGLIQSSRAHAIVALTRHTEKWVIIDAPGLLREVGISDAIVNNFFLAGGEIGHQRPSVIPRGNPDANVDTLAAFPPSCQISAFHQLAEELGHRPAPVAAVLPPCPELEQGLLYLPQELTTCDSVVTFELTDIVHCRMAAPSQRKAVVSTLVGRYGRRTKLYNASHSDVRDSLARFIPAIGPVQVTTCELYELVEAMVEKGQDGSAVLELDLCNRDVSRITFFQKDCNKFTTGETIAHGKVGQGISAWSKTFCALFGPWFRAIEKAILALLPQGVFYGDAFDDTVFSAAVAAAKASMVFENDFSEFDSTQNNFSLGLECAIMEECGMPQGLIRLYHLIRSAWILQAPKESLLGFWKKHSGEPGTLLWNTVWNMAVITHCYDFRDLQVAAFKGDDSIVLCSEYRQSPGAAVLIAGCGLKLKVDFRPMRLYAGVVVAPGLGALPDVVRFAGRLTEKNWGPGPERADELRIAVSDFLRKLTNVAQMCVDVVSRVYGVSPGLVHNLIGMLQAVADGKAHFTESVKPVLDLTNSILCRVE.

The region spanning 56 to 240 (VFRPEVFWNQ…HDVSNLRSWI (185 aa)) is the Alphavirus-like MT domain. Residues 60–240 (EVFWNQPIQR…HDVSNLRSWI (181 aa)) are methyltransferase. Residues 241-439 (RTTKVTGDHP…FYAQCRRWLS (199 aa)) are Y-domain. Residues Cys434 and Cys481 are joined by a disulfide bond. The putative protease stretch occupies residues 442 to 509 (FHLDPRVLVF…ESYEGSDVDP (68 aa)). The interval 510–691 (AESAISDISG…FSPGHVWESA (182 aa)) is zinc-binding. Zn(2+) contacts are provided by His671, Glu673, and His686. Positions 712–778 (SSPTRPDLGF…AITHQTARHR (67 aa)) are hinge. A disordered region spans residues 716 to 769 (RPDLGFMSEPPIPSRAATPTLAAPLPPLAPDPSPPSSAPALDEPASAATSGVPA). Over residues 739 to 752 (PLPPLAPDPSPPSS) the composition is skewed to pro residues. Residues 753–763 (APALDEPASAA) are compositionally biased toward low complexity. A Macro domain is found at 775-921 (ARHRRLLFTY…LYLPELAARW (147 aa)). The segment at 785–942 (PDGSKVFAGS…TITEDAARTA (158 aa)) is X-domain. A (+)RNA virus helicase ATP-binding domain is found at 934–1082 (ITEDAARTAN…RPDLAPTSWW (149 aa)). The NTPase/helicase stretch occupies residues 960–1204 (GCRVTPGVVQ…ISDAIVNNFF (245 aa)). Residue 975–982 (GVPGSGKS) participates in ATP binding. One can recognise a (+)RNA virus helicase C-terminal domain in the interval 1083–1216 (HVTHRCPADV…GGEIGHQRPS (134 aa)). Positions 1207–1693 (GGEIGHQRPS…LTNSILCRVE (487 aa)) are RNA-directed RNA polymerase. The region spanning 1454–1565 (SMVFENDFSE…LCSEYRQSPG (112 aa)) is the RdRp catalytic domain.

This sequence belongs to the hepevirus non-structural polyprotein family. As to quaternary structure, the protease domain interacts with host EIF2AK4 (via C-terminus); this interaction inhibits dimerization of EIF2AK4 and prevents EIF2AK4-mediated phosphorylation of host EIF2A. Mg(2+) is required as a cofactor. ORF1 polyprotein does not seem to be processed into distinct enzymatic domains by a viral protease belonging to ORF1, but could be processed by a host serine protease like thrombin.

The protein resides in the host cytoplasm. The protein localises to the host perinuclear region. It catalyses the reaction RNA(n) + a ribonucleoside 5'-triphosphate = RNA(n+1) + diphosphate. The enzyme catalyses GTP + S-adenosyl-L-methionine = N(7)-methyl-GTP + S-adenosyl-L-homocysteine. Putative protease: Inhibited by chymostatin. In terms of biological role, methyltransferase: Displays a capping enzyme activity. This function is necessary since all viral RNAs are synthesized in the cytoplasm, and host capping enzymes are restricted to the nucleus. The enzymatic reaction involves a covalent link between 7-methyl-GMP and the methyltransferase, whereas eukaryotic capping enzymes form a covalent complex only with GMP. Methyltransferase catalyzes transfer of a methyl group from S-adenosylmethionine to GTP and GDP to yield m(7)GTP or m(7)GDP. GDP is a better substrate than GTP. This enzyme also displays guanylyltransferase activity to form a covalent complex, methyltransferase-m(7)GMP, from which 7-methyl-GMP is transferred to the mRNA to create the cap structure. Functionally, Y-domain: Indispensable for virus replication. Its function is as follows. Putative protease: The putative protease domain although necessary for replication of the virus may not be a protease but rather a structural Zn(2+)-binding domain. Inhibits induction of IFN-beta by MDA5 and RIG-I pathways and down-regulates the expression of MDA5. NTPase/helicase: Multi-functional protein that exhibits NTPase and RNA unwinding activities. Hydrolyzes all NTPs efficiently and unwinds RNA duplexes containing 5' overhangs. Possesses a sequence independent RNA-5'-triphosphatase (RTPase) activity suggestive of its role in forming viral cap structure. Also participates in viral genome replication, RNA translocation and genome packaging/unpackaging. In terms of biological role, RNA-directed RNA polymerase: Plays an essential role in the virus replication. Binds to the 3'-end of the genomic RNA to initiate viral replication. In Bandicota bengalensis (lesser bandicoot rat), this protein is Non-structural polyprotein pORF1.